The sequence spans 259 residues: NAD kinase (259 aa).

The active-site Proton acceptor is Asp43. NAD(+)-binding positions include 43-44 (DG), 111-112 (NE), and Arg136.

The protein belongs to the NAD kinase family. It depends on a divalent metal cation as a cofactor.

Its subcellular location is the cytoplasm. It catalyses the reaction NAD(+) + ATP = ADP + NADP(+) + H(+). In terms of biological role, involved in the regulation of the intracellular balance of NAD and NADP, and is a key enzyme in the biosynthesis of NADP. Catalyzes specifically the phosphorylation on 2'-hydroxyl of the adenosine moiety of NAD to yield NADP. This is NAD kinase from Mycoplasma pneumoniae (strain ATCC 29342 / M129 / Subtype 1) (Mycoplasmoides pneumoniae).